Here is a 143-residue protein sequence, read N- to C-terminus: Subtelomeric hrmA-associated cluster protein cgnA (143 aa).

29 G-Q-I/R/S repeats span residues 11–13 (GQI), 14–16 (GPI), 17–19 (GQR), 20–22 (GQS), 23–25 (GQR), 26–28 (GQS), 29–31 (GQR), 32–34 (GQS), 35–37 (GQI), 38–40 (GQS), 41–43 (GQS), 44–46 (GQS), 47–49 (GQI), 50–52 (GQI), 53–55 (GQI), 56–58 (GQI), 59–61 (GQI), 62–64 (GQI), 65–67 (GQI), 68–70 (GQI), 71–73 (GQI), 74–76 (GQI), 77–79 (GQI), 80–82 (GQI), 83–85 (GQI), 86–88 (GQI), 89–91 (GQI), 92–94 (GQI), and 95–97 (GQA). Positions 11–68 (GQIGPIGQRGQSGQRGQSGQRGQSGQIGQSGQSGQSGQIGQIGQIGQIGQIGQIGQIG) constitute a Collagen-like domain. A 29 X 3 AA approximate tandem repeats of G-Q-I/R/S region spans residues 11–97 (GQIGPIGQRG…IGQIGQIGQA (87 aa)). The segment at 16 to 49 (IGQRGQSGQRGQSGQRGQSGQIGQSGQSGQSGQI) is disordered.

The protein localises to the secreted. In terms of biological role, collagen-like protein; part of the subtelomeric hrmA-associated cluster (HAC) containing genes that alter the hyphal surface (such as reduced total chitin or increased beta-glucan exposure) and perturb inter-hyphal interactions within the developing biofilms, resulting in a loss of vertically aligned polarized growing filaments. Consequently, this hypoxia-typic morphotype (called H-MORPH) with altered biofilm architecture leads to increased hypoxia fitness, increased host inflammation, rapid disease progression, and mortality in a murine model of invasive aspergillosis. CgnA is directly involved in the reduction of total surface chitin and the increase of beta-glucan exposure, and mediates the detachment of the extracellular matrix and especially of its component galactosaminogalactan (GAG). In Aspergillus fumigatus (strain ATCC MYA-4609 / CBS 101355 / FGSC A1100 / Af293) (Neosartorya fumigata), this protein is Subtelomeric hrmA-associated cluster protein cgnA.